A 156-amino-acid polypeptide reads, in one-letter code: ATP synthase subunit b (156 aa).

Residues 12–32 form a helical membrane-spanning segment; it reads VAFLIFVLFCMKFIWPPVIAA.

This sequence belongs to the ATPase B chain family. F-type ATPases have 2 components, F(1) - the catalytic core - and F(0) - the membrane proton channel. F(1) has five subunits: alpha(3), beta(3), gamma(1), delta(1), epsilon(1). F(0) has three main subunits: a(1), b(2) and c(10-14). The alpha and beta chains form an alternating ring which encloses part of the gamma chain. F(1) is attached to F(0) by a central stalk formed by the gamma and epsilon chains, while a peripheral stalk is formed by the delta and b chains.

The protein resides in the cell inner membrane. Functionally, f(1)F(0) ATP synthase produces ATP from ADP in the presence of a proton or sodium gradient. F-type ATPases consist of two structural domains, F(1) containing the extramembraneous catalytic core and F(0) containing the membrane proton channel, linked together by a central stalk and a peripheral stalk. During catalysis, ATP synthesis in the catalytic domain of F(1) is coupled via a rotary mechanism of the central stalk subunits to proton translocation. In terms of biological role, component of the F(0) channel, it forms part of the peripheral stalk, linking F(1) to F(0). The chain is ATP synthase subunit b from Pseudomonas fluorescens (strain ATCC BAA-477 / NRRL B-23932 / Pf-5).